The chain runs to 447 residues: Tubulin beta-2 chain (447 aa).

GTP-binding residues include Gln-11, Glu-69, Ser-138, Gly-142, Thr-143, Gly-144, Asn-204, and Asn-226. Position 69 (Glu-69) interacts with Mg(2+). Residues 426-447 are disordered; that stretch reads QDAGVDEEEEEYEDDAPLEEEV. Over residues 429 to 447 the composition is skewed to acidic residues; the sequence is GVDEEEEEYEDDAPLEEEV.

It belongs to the tubulin family. Dimer of alpha and beta chains. A typical microtubule is a hollow water-filled tube with an outer diameter of 25 nm and an inner diameter of 15 nM. Alpha-beta heterodimers associate head-to-tail to form protofilaments running lengthwise along the microtubule wall with the beta-tubulin subunit facing the microtubule plus end conferring a structural polarity. Microtubules usually have 13 protofilaments but different protofilament numbers can be found in some organisms and specialized cells. Mg(2+) is required as a cofactor.

Its subcellular location is the cytoplasm. The protein localises to the cytoskeleton. Tubulin is the major constituent of microtubules, a cylinder consisting of laterally associated linear protofilaments composed of alpha- and beta-tubulin heterodimers. Microtubules grow by the addition of GTP-tubulin dimers to the microtubule end, where a stabilizing cap forms. Below the cap, tubulin dimers are in GDP-bound state, owing to GTPase activity of alpha-tubulin. This is Tubulin beta-2 chain (TUB2) from Colletotrichum graminicola (Maize anthracnose fungus).